The sequence spans 698 residues: Polyribonucleotide nucleotidyltransferase (698 aa).

Positions 490 and 496 each coordinate Mg(2+). The 60-residue stretch at 557-616 (PKVVTMTIKPDKIRDVIGPGGKKINEIIDETGVKLDIEQDGTIFIGAVDQAMINRAREII) folds into the KH domain. Residues 626–694 (GQTYQATVKR…KQGRVNASHR (69 aa)) enclose the S1 motif domain.

This sequence belongs to the polyribonucleotide nucleotidyltransferase family. It depends on Mg(2+) as a cofactor.

It is found in the cytoplasm. The enzyme catalyses RNA(n+1) + phosphate = RNA(n) + a ribonucleoside 5'-diphosphate. Involved in mRNA degradation. Catalyzes the phosphorolysis of single-stranded polyribonucleotides processively in the 3'- to 5'-direction. This is Polyribonucleotide nucleotidyltransferase from Staphylococcus aureus (strain MRSA252).